Here is a 549-residue protein sequence, read N- to C-terminus: Cation/acetate symporter ActP (549 aa).

13 consecutive transmembrane segments (helical) span residues 33 to 53 (WQAI…TYWA), 77 to 97 (LAIA…ALVF), 103 to 123 (GLIY…LIAE), 148 to 168 (ILSA…QMVG), 183 to 203 (IAVV…GMLA), 206 to 226 (WVQI…AFMV), 262 to 282 (ISAL…PHIL), 303 to 323 (GFMG…IMLV), 355 to 375 (LFLG…VAGL), 404 to 424 (VSKI…VLFE), 428 to 448 (IAFM…PIIL), 464 to 484 (GGWL…TIWV), and 493 to 513 (IFPY…GIWF).

The protein belongs to the sodium:solute symporter (SSF) (TC 2.A.21) family.

It localises to the cell inner membrane. Transports acetate. This is Cation/acetate symporter ActP from Escherichia coli O6:K15:H31 (strain 536 / UPEC).